We begin with the raw amino-acid sequence, 131 residues long: uncharacterized protein (131 aa).

This is an uncharacterized protein from Saccharomyces cerevisiae (strain ATCC 204508 / S288c) (Baker's yeast).